The sequence spans 528 residues: Beta-hexosaminidase subunit alpha (528 aa).

Positions 1-22 (MAGCRLWVSLLLAAALACLATA) are cleaved as a signal peptide. Positions 23–88 (LWPWPQYIQT…PRPSFSKKQQ (66 aa)) are excised as a propeptide. Cysteines 58 and 104 form a disulfide. Asn-115, Asn-157, and Asn-295 each carry an N-linked (GlcNAc...) asparagine glycan. Residues Cys-277 and Cys-328 are joined by a disulfide bond. Glu-323 (proton donor) is an active-site residue. Residues 422 to 423 (NR) form a critical for hydrolysis GM2 gangliosides region. N-linked (GlcNAc...) asparagine glycosylation occurs at Asn-487. Cys-504 and Cys-521 are disulfide-bonded.

This sequence belongs to the glycosyl hydrolase 20 family. There are 3 beta-hexosaminidase isozymes: isozyme A (hexosaminidase A) is a heterodimer composed of one subunit alpha and one subunit beta (chain A and B); isozyme B (hexosaminidase B) is a homodimer of two beta subunits (two chains A and B); isozyme S (hexosaminidase S) is a homodimer of two alpha subunits. The composition of the dimer (isozyme A versus isozyme S) has a significant effect on the substrate specificity of the alpha subunit active site.

The protein localises to the lysosome. The catalysed reaction is Hydrolysis of terminal non-reducing N-acetyl-D-hexosamine residues in N-acetyl-beta-D-hexosaminides.. It catalyses the reaction N-acetyl-beta-D-galactosaminyl-(1-&gt;4)-beta-D-3-sulfogalactosyl-(1-&gt;4)-beta-D-glucosyl-(1&lt;-&gt;1')-ceramide + H2O = a beta-D-3-sulfogalactosyl-(1-&gt;4)-beta-D-glucosyl-(1&lt;-&gt;1')-ceramide + N-acetyl-beta-D-galactosamine. The enzyme catalyses a ganglioside GM2 (d18:1(4E)) + H2O = a ganglioside GM3 (d18:1(4E)) + N-acetyl-beta-D-galactosamine. It carries out the reaction a ganglioside GM2 + H2O = a ganglioside GM3 + N-acetyl-beta-D-galactosamine. The catalysed reaction is beta-D-GalNAc-(1-&gt;4)-alpha-L-IdoA-(1-&gt;3)-beta-D-GalNAc-4-sulfate-(1-&gt;4)-alpha-L-IdoA-(1-&gt;3)-D-GalNAc-4-sulfate + H2O = alpha-L-IdoA-(1-&gt;3)-beta-D-GalNAc-4-sulfate-(1-&gt;4)-alpha-L-IdoA-(1-&gt;3)-D-GalNAc-4-sulfate + N-acetyl-D-galactosamine. It catalyses the reaction N-acetyl-beta-D-6-sulfogalactosaminyl-(1-&gt;4)-alpha-L-iduronyl-(1-&gt;3)-N-acetyl-D-6-sulfogalactosamine + H2O = alpha-L-iduronyl-(1-&gt;3)-N-acetyl-D-6-sulfogalactosamine + N-acetyl-D-6-sulfogalactosamine. Its activity is regulated as follows. Addition of GM2A stimulates the hydrolysis of sulfated glycosphingolipid SM2 and the ganglioside GM2. Functionally, hydrolyzes the non-reducing end N-acetyl-D-hexosamine and/or sulfated N-acetyl-D-hexosamine of glycoconjugates, such as the oligosaccharide moieties from proteins and neutral glycolipids, or from certain mucopolysaccharides. The isozyme S is as active as the isozyme A on the anionic bis-sulfated glycans, the chondroitin-6-sulfate trisaccharide (C6S-3), and the dermatan sulfate pentasaccharide, and the sulfated glycosphingolipid SM2. The isozyme B does not hydrolyze each of these substrates, however hydrolyzes efficiently neutral oligosaccharide. Only the isozyme A is responsible for the degradation of GM2 gangliosides in the presence of GM2A. In Rattus norvegicus (Rat), this protein is Beta-hexosaminidase subunit alpha.